We begin with the raw amino-acid sequence, 178 residues long: Neuroblastoma suppressor of tumorigenicity 1 (178 aa).

An N-terminal signal peptide occupies residues 1 to 16 (MLWVLVGTVLPVMLLA). Intrachain disulfides connect Cys-34–Cys-84, Cys-48–Cys-98, Cys-58–Cys-117, Cys-62–Cys-119, and Cys-81–Cys-122. Residues 34-123 (CEAKNITQIV…IVHCSCQACG (90 aa)) enclose the CTCK domain. The disordered stretch occupies residues 130–178 (GLNVYMQGEDGPGSQPGSHSHSHPHPGCQTPEPEEPPGAPQVEEEGAED).

It belongs to the DAN family. As to quaternary structure, homodimer. Most abundant in lung, brain, intestine and kidney.

It localises to the secreted. Possible candidate as a tumor suppressor gene of neuroblastoma. May play an important role in preventing cells from entering the final stage (G1/S) of the transformation process. In Rattus norvegicus (Rat), this protein is Neuroblastoma suppressor of tumorigenicity 1 (Nbl1).